Reading from the N-terminus, the 158-residue chain is Rhombotin-2 (158 aa).

LIM zinc-binding domains follow at residues 28–90 and 92–154; these read LTCG…LFGQ and GLCA…WTKL.

In terms of tissue distribution, expression becomes restricted to the ventral blood island (VBI) as the embryo develops. In late neurula and early tailbud embryos, also expressed in the dorsal lateral plate (DLP), the site of definitive hematopoiesis in the tadpole. Expression in the DLP diminishes during tailbud stages. Expressed in circulating blood cells of tadpoles. Also expressed in non-hematopoietic sites, including the tailbud region and the central nervous system of early neurula embryos.

It localises to the nucleus. Functionally, transcription factor that acts synergistically with tal1/scl and gata1 to specify embryonic dorsal mesoderm to a hematopoietic fate. Induces globin gene expression together with fgf. The polypeptide is Rhombotin-2 (Xenopus laevis (African clawed frog)).